The primary structure comprises 119 residues: NADH-quinone oxidoreductase subunit A (119 aa).

3 helical membrane-spanning segments follow: residues 9-29, 63-83, and 88-108; these read VLLF…LGYV, LVAI…PWAV, and VGGA…VGFV.

The protein belongs to the complex I subunit 3 family. As to quaternary structure, NDH-1 is composed of 14 different subunits. Subunits NuoA, H, J, K, L, M, N constitute the membrane sector of the complex.

It is found in the cell inner membrane. It carries out the reaction a quinone + NADH + 5 H(+)(in) = a quinol + NAD(+) + 4 H(+)(out). NDH-1 shuttles electrons from NADH, via FMN and iron-sulfur (Fe-S) centers, to quinones in the respiratory chain. The immediate electron acceptor for the enzyme in this species is believed to be ubiquinone. Couples the redox reaction to proton translocation (for every two electrons transferred, four hydrogen ions are translocated across the cytoplasmic membrane), and thus conserves the redox energy in a proton gradient. This chain is NADH-quinone oxidoreductase subunit A, found in Delftia acidovorans (strain DSM 14801 / SPH-1).